The following is a 298-amino-acid chain: tRNA U34 carboxymethyltransferase (298 aa).

Carboxy-S-adenosyl-L-methionine contacts are provided by residues Lys69, Trp83, Lys88, Gly107, 129 to 131 (DPS), 156 to 157 (VE), Tyr176, and Arg291.

It belongs to the class I-like SAM-binding methyltransferase superfamily. CmoB family. In terms of assembly, homotetramer.

It catalyses the reaction carboxy-S-adenosyl-L-methionine + 5-hydroxyuridine(34) in tRNA = 5-carboxymethoxyuridine(34) in tRNA + S-adenosyl-L-homocysteine + H(+). Catalyzes carboxymethyl transfer from carboxy-S-adenosyl-L-methionine (Cx-SAM) to 5-hydroxyuridine (ho5U) to form 5-carboxymethoxyuridine (cmo5U) at position 34 in tRNAs. This Campylobacter curvus (strain 525.92) protein is tRNA U34 carboxymethyltransferase.